Reading from the N-terminus, the 380-residue chain is O-phospho-L-seryl-tRNA:Cys-tRNA synthase (380 aa).

Pyridoxal 5'-phosphate is bound by residues 86-87, N192, and 215-217; these read AR and SGH. K218 is modified (N6-(pyridoxal phosphate)lysine).

This sequence belongs to the SepCysS family. In terms of assembly, homodimer. Interacts with SepRS. Pyridoxal 5'-phosphate serves as cofactor.

The enzyme catalyses O-phospho-L-seryl-tRNA(Cys) + hydrogen sulfide + H(+) = L-cysteinyl-tRNA(Cys) + phosphate. Its function is as follows. Converts O-phospho-L-seryl-tRNA(Cys) (Sep-tRNA(Cys)) to L-cysteinyl-tRNA(Cys) (Cys-tRNA(Cys)). In Methanococcus maripaludis (strain C7 / ATCC BAA-1331), this protein is O-phospho-L-seryl-tRNA:Cys-tRNA synthase.